We begin with the raw amino-acid sequence, 159 residues long: uncharacterized protein (159 aa).

The next 2 membrane-spanning stretches (helical) occupy residues 59-79 and 91-113; these read IGALAAMLAVLSFALGCALVY and VFSVLSGLLYGGGAVLWGLRRVC.

The protein resides in the cell membrane. This is an uncharacterized protein from Treponema pallidum (strain Nichols).